Consider the following 36-residue polypeptide: Potassium channel toxin alpha-KTx 1.9 (36 aa).

It belongs to the short scorpion toxin superfamily. Potassium channel inhibitor family. Alpha-KTx 01 subfamily. Expressed by the venom gland.

The protein localises to the secreted. Functionally, potent selective inhibitor of Kv1/KCNA voltage-gated potassium channels. The sequence is that of Potassium channel toxin alpha-KTx 1.9 from Centruroides limbatus (Bark scorpion).